The sequence spans 147 residues: Plasminogen receptor (KT) (147 aa).

The Extracellular portion of the chain corresponds to 1–52 (MGFIFSKSMNENMKNQQEFMVTHARLQLERHLTMQNEMRERQMAMQIAWSRE). Residues 53 to 73 (FLKYFGTFFGIATISLATGAL) traverse the membrane as a helical segment. Topologically, residues 74 to 78 (KRKKP) are cytoplasmic. A helical transmembrane segment spans residues 79-99 (AFLVPIVPLSFIFTYQYDLGY). The Extracellular portion of the chain corresponds to 100 to 147 (GTLLQRMKSEAEDILETEKTKLELPKGLITFESLEKARREQSKLFSDK).

As to quaternary structure, interacts with PLAT. Interacts with PLAUR. In terms of tissue distribution, expressed in monocytes; detected in differentiated monocytes but not in progenitor cells. Expressed in adrenal medulla and hippocampus.

It localises to the cell membrane. Its function is as follows. Receptor for plasminogen. Regulates urokinase plasminogen activator-dependent and stimulates tissue-type plasminogen activator-dependent cell surface plasminogen activation. Proposed to be part of a local catecholaminergic cell plasminogen activation system that regulates neuroendocrine prohormone processing. Involved in regulation of inflammatory response; regulates monocyte chemotactic migration and matrix metalloproteinase activation, such as of MMP2 and MMP9. The polypeptide is Plasminogen receptor (KT) (Plgrkt) (Mus musculus (Mouse)).